The primary structure comprises 163 residues: Aspartate 1-decarboxylase (163 aa).

Residue Ser-25 is the Schiff-base intermediate with substrate; via pyruvic acid of the active site. The residue at position 25 (Ser-25) is a Pyruvic acid (Ser). Thr-57 serves as a coordination point for substrate. Residue Tyr-58 is the Proton donor of the active site. 73–75 (GAA) lines the substrate pocket.

Belongs to the PanD family. Heterooctamer of four alpha and four beta subunits. The cofactor is pyruvate. Post-translationally, is synthesized initially as an inactive proenzyme, which is activated by self-cleavage at a specific serine bond to produce a beta-subunit with a hydroxyl group at its C-terminus and an alpha-subunit with a pyruvoyl group at its N-terminus.

The protein resides in the cytoplasm. It catalyses the reaction L-aspartate + H(+) = beta-alanine + CO2. It functions in the pathway cofactor biosynthesis; (R)-pantothenate biosynthesis; beta-alanine from L-aspartate: step 1/1. Functionally, catalyzes the pyruvoyl-dependent decarboxylation of aspartate to produce beta-alanine. This chain is Aspartate 1-decarboxylase, found in Saccharopolyspora erythraea (strain ATCC 11635 / DSM 40517 / JCM 4748 / NBRC 13426 / NCIMB 8594 / NRRL 2338).